Here is a 333-residue protein sequence, read N- to C-terminus: Transcription initiation factor IIB (333 aa).

The TFIIB-type zinc finger occupies 33–64; that stretch reads EVYKCPICGNDKFVYNYERGEAVCIVCGAVVQ. 4 residues coordinate Zn(2+): Cys37, Cys40, Cys56, and Cys59. 2 repeat units span residues 149-232 and 243-324.

It belongs to the TFIIB family.

Its function is as follows. Stabilizes TBP binding to an archaeal box-A promoter. Also responsible for recruiting RNA polymerase II to the pre-initiation complex (DNA-TBP-TFIIB). The polypeptide is Transcription initiation factor IIB (Pyrobaculum aerophilum (strain ATCC 51768 / DSM 7523 / JCM 9630 / CIP 104966 / NBRC 100827 / IM2)).